Consider the following 983-residue polypeptide: Nitrate reductase [NADPH] (983 aa).

Low complexity-rich tracts occupy residues 1–14 (MTIS…SSKT) and 26–48 (SSSS…SSPT). Positions 1 to 50 (MTISTTSSSTSSKTSSEKGDDLKGFSSSSSPASSRSSSATTPEPSSPTVL) are disordered. Cys184 is a Mo-molybdopterin binding site. Positions 585 to 662 (DTIITAADLA…LRDFHLGRLE (78 aa)) constitute a Cytochrome b5 heme-binding domain. 2 residues coordinate heme: His622 and His645. The 128-residue stretch at 688 to 815 (KKWRATRLVS…KGPLGSFTYL (128 aa)) folds into the FAD-binding FR-type domain. FAD contacts are provided by residues 746–749 (RAYT), 763–767 (LIKVY), Phe768, Phe780, 784–786 (KMT), Ser841, and Thr844. Position 952 to 961 (952 to 961 (LALVCGPPPM)) interacts with NADP(+).

This sequence belongs to the nitrate reductase family. Homodimer. It depends on FAD as a cofactor. Heme serves as cofactor. The cofactor is Mo-molybdopterin.

The enzyme catalyses nitrite + NADP(+) + H2O = nitrate + NADPH + H(+). It functions in the pathway nitrogen metabolism; nitrate reduction (assimilation). Functionally, nitrate reductase is a key enzyme involved in the first step of nitrate assimilation in plants, fungi and bacteria. The sequence is that of Nitrate reductase [NADPH] (NAR1) from Mycosarcoma maydis (Corn smut fungus).